A 776-amino-acid polypeptide reads, in one-letter code: MDQEMTTVASPDIRVKATSPDSNRAVLEQSIVLSDSGRLDEGSSIRGGELERDSQEVGRETVREPLMCHDLDIHALAQRGDTAAIAAMLQENPSLNLSARDAQDVTPLHWAAINAHMGTCRLLIDSGADIDAIGGELKATPLQWAARNGHLYVVHLLISRGADPNIHDSQGFNTLHLITHSSAVMPLLYMLHQPVAIDEKDTDGHTALMWAAYQGDALSVDLLIRHGASVNSTDNAGMTPLHWAAVKGNKVSIMHLVEAGASLDAKEEAGKTPRDMAEELRGLVPFQKGLEEAGWSIDGVKMEGKLGPRNTILAIFLLPIAVLWLIFSTFKWLPVYVGVPFAIAEFMGMQYTVVLVLLGHIKAQDKVSTSNYFASIITASLIWVGYCWISRFAVNTPGYAFSNLGFIIMFVGCCWTFWTAIVTDPGFVPKGQQDAEIKEVLEDLVDAGRLNGTNFCIVCMARKPLRSKHCRTCNRCVARFDHHCPWIWNCVGAKNHRSFLLFVLFLIGGIILFIRLTIAYIQQNAPEYIPTPNPGLTTCDISTTLCQAGDFDPFLLCMALWSTLQLTWTSVLAISHLWQVSRQMTTFEVSNLGRYGFMGGRGGQSLRDQSGAMLKQAAAVGAGIGMSGAGEEAAGPPGAEAGPEGNALLPPPGGHVHGPQCRHGDHARGHSHGVLHICGALWKTLTGPLMTILGLDRFTKGKALGGMKRAGRDQNPFDMGMVKNCIDFWLPDNDVDYMTVYEIPPGGWRAYRRKLAMDKRVPGGKGRYEVVSEQEV.

The Cytoplasmic segment spans residues 1-311; the sequence is MDQEMTTVAS…MEGKLGPRNT (311 aa). The interval 38–58 is disordered; the sequence is RLDEGSSIRGGELERDSQEVG. ANK repeat units follow at residues 68–97, 103–132, 137–166, 170–199, 203–232, and 236–265; these read CHDL…SLNL, QDVT…DIDA, LKAT…DPNI, QGFN…AIDE, DGHT…SVNS, and AGMT…SLDA. The chain crosses the membrane as a helical span at residues 312-332; the sequence is ILAIFLLPIAVLWLIFSTFKW. Topologically, residues 333–336 are lumenal; sequence LPVY. A helical transmembrane segment spans residues 337–357; sequence VGVPFAIAEFMGMQYTVVLVL. Topologically, residues 358–368 are cytoplasmic; that stretch reads LGHIKAQDKVS. Residues 369 to 389 traverse the membrane as a helical segment; that stretch reads TSNYFASIITASLIWVGYCWI. Topologically, residues 390 to 402 are lumenal; the sequence is SRFAVNTPGYAFS. The helical transmembrane segment at 403 to 423 threads the bilayer; sequence NLGFIIMFVGCCWTFWTAIVT. The Cytoplasmic portion of the chain corresponds to 424 to 498; it reads DPGFVPKGQQ…NCVGAKNHRS (75 aa). The DHHC domain occupies 454-504; that stretch reads NFCIVCMARKPLRSKHCRTCNRCVARFDHHCPWIWNCVGAKNHRSFLLFVL. The active-site S-palmitoyl cysteine intermediate is Cys-484. Residues 499-519 form a helical membrane-spanning segment; that stretch reads FLLFVLFLIGGIILFIRLTIA. Residues 520–553 are Lumenal-facing; the sequence is YIQQNAPEYIPTPNPGLTTCDISTTLCQAGDFDP. Residues 554-574 form a helical membrane-spanning segment; that stretch reads FLLCMALWSTLQLTWTSVLAI. Residues 575–776 are Cytoplasmic-facing; that stretch reads SHLWQVSRQM…RYEVVSEQEV (202 aa). Positions 628 to 665 are disordered; sequence GAGEEAAGPPGAEAGPEGNALLPPPGGHVHGPQCRHGD. Residues 629–645 are compositionally biased toward low complexity; it reads AGEEAAGPPGAEAGPEG.

This sequence belongs to the DHHC palmitoyltransferase family. AKR/ZDHHC17 subfamily.

The protein localises to the early endosome membrane. Its subcellular location is the golgi apparatus membrane. The enzyme catalyses L-cysteinyl-[protein] + hexadecanoyl-CoA = S-hexadecanoyl-L-cysteinyl-[protein] + CoA. In terms of biological role, palmitoyltransferase specific for casein kinase 1. The chain is Palmitoyltransferase AKR1 (AKR1) from Cryptococcus neoformans var. neoformans serotype D (strain B-3501A) (Filobasidiella neoformans).